The following is a 93-amino-acid chain: YcgL domain-containing protein Ssed_2518 (93 aa).

Residues 1–85 form the YcgL domain; sequence MICAVYKSRR…PKVNLLEQHK (85 aa).

The sequence is that of YcgL domain-containing protein Ssed_2518 from Shewanella sediminis (strain HAW-EB3).